A 940-amino-acid chain; its full sequence is Serine/threonine-protein kinase PLK4 (940 aa).

A Protein kinase domain is found at 12-265 (FKVLTLLGKG…LSAVLDHPFM (254 aa)). Residues 18 to 26 (LGKGSFACV) and Lys-41 contribute to the ATP site. The active-site Proton acceptor is Asp-136. Disordered stretches follow at residues 262–353 (HPFM…DLSR) and 409–529 (RLFP…DAFV). Positions 273–305 (SKDSGSSNGGSIDSGIATISTASNATNNSSSSR) are enriched in low complexity. Polar residues-rich tracts occupy residues 337–349 (FKSG…NSQD), 440–465 (NPAS…QPWF), and 494–519 (GTQT…QHNN). Residues 563-676 (CLKKSFPPLC…TKFVQLVKSK (114 aa)) form the Cryptic POLO box 1 (CPB1) domain. One can recognise a Cryptic POLO box 2 (CPB2) domain in the interval 677-791 (TPKVTLYTKF…GRRPVNPVPP (115 aa)). Residues 857–935 (KVLKSIFVPN…LSSILGLLAN (79 aa)) enclose the POLO box domain.

This sequence belongs to the protein kinase superfamily. Ser/Thr protein kinase family. CDC5/Polo subfamily. Homodimer. In terms of processing, ubiquitinated; leading to its degradation by the proteasome.

The protein resides in the cytoplasm. The protein localises to the cytoskeleton. It localises to the microtubule organizing center. It is found in the centrosome. Its subcellular location is the centriole. The enzyme catalyses L-seryl-[protein] + ATP = O-phospho-L-seryl-[protein] + ADP + H(+). The catalysed reaction is L-threonyl-[protein] + ATP = O-phospho-L-threonyl-[protein] + ADP + H(+). In terms of biological role, serine/threonine-protein kinase that plays a central role in centriole duplication. Able to trigger procentriole formation on the surface of the parental centriole cylinder, leading to the recruitment of centriole biogenesis proteins such as sass6, cpap, ccp110, cep135 and gamma-tubulin. When overexpressed, it is able to induce centrosome amplification through the simultaneous generation of multiple procentrioles adjoining each parental centriole during S phase. Its central role in centriole replication suggests a possible role in tumorigenesis, centrosome aberrations being frequently observed in tumors. Also involved in deuterosome-mediated centriole amplification in multiciliated that can generate more than 100 centrioles. This Danio rerio (Zebrafish) protein is Serine/threonine-protein kinase PLK4.